Consider the following 187-residue polypeptide: Prepronociceptin (187 aa).

The N-terminal stretch at 1–19 (MKILFCDVLLLSLLSSVFS) is a signal peptide. The propeptide occupies 20 to 95 (SCPRDCLTCQ…QPKASEMQHL (76 aa)). A run of 3 repeats spans residues 109–114 (DAEPGA), 115–120 (DAEPGA), and 121–126 (DAEPGA). The segment at 109-126 (DAEPGADAEPGADAEPGA) is 3 X 6 AA tandem repeats of D-A-E-P-G-A. Residues 109–133 (DAEPGADAEPGADAEPGADDAEEVE) form a disordered region. A compositionally biased stretch (acidic residues) spans 112 to 131 (PGADAEPGADAEPGADDAEE). Residues 180-187 (TLHQNGNV) constitute a propeptide that is removed on maturation.

Belongs to the opioid neuropeptide precursor family. In terms of processing, specific enzymatic cleavages at paired basic residues probably yield other active peptides besides nociceptin. Post-translationally, the N-terminal domain contains 6 conserved cysteines thought to be involved in disulfide bonding and/or processing. As to expression, brain and spinal cord. Low levels in kidney and spleen.

The protein localises to the secreted. Functionally, ligand of the opioid receptor-like receptor OPRL1. It may act as a transmitter in the brain by modulating nociceptive and locomotor behavior. May be involved in neuronal differentiation and development. When administered intracerebroventricularly, nociceptin induces hyperalgesia and decreases locomotor activity. Its function is as follows. Blocks nociceptin action in pain transmission by inhibiting nociceptin-induced hyperalgesia and allodynia. In terms of biological role, has potent analgesic activity. This Mus musculus (Mouse) protein is Prepronociceptin (Pnoc).